The primary structure comprises 138 residues: MRHGYRGRRFNRTTEHRKAMFANMSAALIKHEQIVTTLPKAKDLRPVVEKLISLGRTDSIHARRLAMAQIRDADMVKKLFSVLGPRYQSRPGGYCRIMKAGFRYGDNAPMAVIEFVDRDVDARGKDSGPTSVETAEAA.

The protein belongs to the bacterial ribosomal protein bL17 family. As to quaternary structure, part of the 50S ribosomal subunit. Contacts protein L32.

The sequence is that of Large ribosomal subunit protein bL17 from Methylorubrum extorquens (strain CM4 / NCIMB 13688) (Methylobacterium extorquens).